The primary structure comprises 92 residues: Large ribosomal subunit protein eL43y (92 aa).

The C4-type zinc finger occupies 39–60 (CEFCGKYGVKRKAVGIWGCKDC).

Belongs to the eukaryotic ribosomal protein eL43 family.

This chain is Large ribosomal subunit protein eL43y (RPL37AC), found in Arabidopsis thaliana (Mouse-ear cress).